The following is a 448-amino-acid chain: Neurexin-1b-beta (448 aa).

Positions 1-38 (MFGGWRLVVWQIFSEIITRRLGFWICLYFAALSVGMIS) are cleaved as a signal peptide. Residues 39-375 (GSEPLVRTRH…EVFRESNGTT (337 aa)) are Extracellular-facing. The region spanning 71–269 (STYVFGRQGG…DPNVRMEGSV (199 aa)) is the Laminin G-like domain. A helical membrane pass occupies residues 376–396 (GMVVGIVAGAALCILILLYAM). Residues 397-448 (YKYRNRDEGSYHVDESRNYICNSNGAALKEKNTADDDSGSKSKKNKNKEYYV) are Cytoplasmic-facing. A compositionally biased stretch (basic and acidic residues) spans 426–436 (EKNTADDDSGS). A disordered region spans residues 426–448 (EKNTADDDSGSKSKKNKNKEYYV).

The protein belongs to the neurexin family.

It is found in the membrane. Its function is as follows. Neuronal cell surface protein that may be involved in cell recognition and cell adhesion. May play a role in formation or maintenance of synaptic junctions. The chain is Neurexin-1b-beta (nrxn1b) from Danio rerio (Zebrafish).